We begin with the raw amino-acid sequence, 338 residues long: Tryptophan--tRNA ligase (338 aa).

ATP-binding positions include 12-14 (QPT) and 20-21 (GN). The 'HIGH' region signature appears at 13-21 (PTGDLHIGN). Asp-136 is an L-tryptophan binding site. Residues 148–150 (GED), Ile-191, and 200–204 (KMSKS) each bind ATP. The short motif at 200–204 (KMSKS) is the 'KMSKS' region element.

This sequence belongs to the class-I aminoacyl-tRNA synthetase family. As to quaternary structure, homodimer.

Its subcellular location is the cytoplasm. The catalysed reaction is tRNA(Trp) + L-tryptophan + ATP = L-tryptophyl-tRNA(Trp) + AMP + diphosphate + H(+). Functionally, catalyzes the attachment of tryptophan to tRNA(Trp). The protein is Tryptophan--tRNA ligase of Prochlorococcus marinus subsp. pastoris (strain CCMP1986 / NIES-2087 / MED4).